Here is a 197-residue protein sequence, read N- to C-terminus: Mediator of RNA polymerase II transcription subunit 10 (197 aa).

Residues 1–39 (MSSTAGTRRPRQITPTSPSPSPEPQPGATNGSSSTINVA) are disordered. The segment covering 27 to 37 (GATNGSSSTIN) has biased composition (polar residues).

Belongs to the Mediator complex subunit 10 family. As to quaternary structure, component of the Mediator complex.

It is found in the nucleus. In terms of biological role, component of the Mediator complex, a coactivator involved in the regulated transcription of nearly all RNA polymerase II-dependent genes. Mediator functions as a bridge to convey information from gene-specific regulatory proteins to the basal RNA polymerase II transcription machinery. Mediator is recruited to promoters by direct interactions with regulatory proteins and serves as a scaffold for the assembly of a functional preinitiation complex with RNA polymerase II and the general transcription factors. This chain is Mediator of RNA polymerase II transcription subunit 10 (NUT2), found in Mycosarcoma maydis (Corn smut fungus).